The primary structure comprises 573 residues: Potassium-transporting ATPase potassium-binding subunit (573 aa).

The next 10 membrane-spanning stretches (helical) occupy residues 6–26 (ILFA…GSYI), 66–86 (FFSL…ILLL), 135–155 (ALAV…IALI), 177–197 (VFWI…FQGV), 257–277 (IQMV…GKWV), 283–303 (GWLI…VMTI), 382–402 (IFGG…LAVF), 428–448 (MFAL…AAVI), 493–513 (ITIA…VIML), and 537–557 (FIFA…TIFP).

Belongs to the KdpA family. In terms of assembly, the system is composed of three essential subunits: KdpA, KdpB and KdpC.

The protein resides in the cell inner membrane. Its function is as follows. Part of the high-affinity ATP-driven potassium transport (or Kdp) system, which catalyzes the hydrolysis of ATP coupled with the electrogenic transport of potassium into the cytoplasm. This subunit binds the periplasmic potassium ions and delivers the ions to the membrane domain of KdpB through an intramembrane tunnel. This chain is Potassium-transporting ATPase potassium-binding subunit, found in Francisella tularensis subsp. mediasiatica (strain FSC147).